The primary structure comprises 35 residues: Photosystem II reaction center protein M (35 aa).

The chain crosses the membrane as a helical span at residues 5-25 (ILAFVATALFILIPTAFLLIL).

This sequence belongs to the PsbM family. In terms of assembly, PSII is composed of 1 copy each of membrane proteins PsbA, PsbB, PsbC, PsbD, PsbE, PsbF, PsbH, PsbI, PsbJ, PsbK, PsbL, PsbM, PsbT, PsbX, PsbY, PsbZ, Psb30/Ycf12, at least 3 peripheral proteins of the oxygen-evolving complex and a large number of cofactors. It forms dimeric complexes.

Its subcellular location is the plastid. It localises to the chloroplast thylakoid membrane. One of the components of the core complex of photosystem II (PSII). PSII is a light-driven water:plastoquinone oxidoreductase that uses light energy to abstract electrons from H(2)O, generating O(2) and a proton gradient subsequently used for ATP formation. It consists of a core antenna complex that captures photons, and an electron transfer chain that converts photonic excitation into a charge separation. This subunit is found at the monomer-monomer interface. In Adiantum capillus-veneris (Maidenhair fern), this protein is Photosystem II reaction center protein M.